We begin with the raw amino-acid sequence, 474 residues long: Trigger factor (474 aa).

The 88-residue stretch at 174 to 261 folds into the PPIase FKBP-type domain; the sequence is GDIAVVSFKG…LKDLKEKELP (88 aa). The interval 435–474 is disordered; the sequence is VKEKTTKTSKATKTSKTTKATKTASKTTKTTKTQNKKEKK. Residues 442–467 are compositionally biased toward low complexity; it reads TSKATKTSKTTKATKTASKTTKTTKT.

It belongs to the FKBP-type PPIase family. Tig subfamily.

Its subcellular location is the cytoplasm. The catalysed reaction is [protein]-peptidylproline (omega=180) = [protein]-peptidylproline (omega=0). Its function is as follows. Involved in protein export. Acts as a chaperone by maintaining the newly synthesized protein in an open conformation. Functions as a peptidyl-prolyl cis-trans isomerase. This is Trigger factor from Prochlorococcus marinus (strain AS9601).